We begin with the raw amino-acid sequence, 546 residues long: MEKIKYLKSIQISQRSVLDLKLLAVGAFTPLDRFMGEEDYRNVVESMRLKSGTLFPIPITLPMEKEIAKDLKEGEWIVLRDPKNVPLAIMRVEEVYKWNLEYEAKNVLGTTDPRHPLVAEMHTWGEYYISGELKVIQLPKYYDFPEYRKTPKQVREEIKSLGLDKIVAFQTRNPMHRVHEELTKRAMEKVGGGLLLHPVVGLTKPGDVDVYTRMRIYKVLYEKYYDKKKTILAFLPLAMRMAGPREALWHGIIRRNYGATHFIVGRDHASPGKDSKGKPFYDPYEAQELFKKYEDEIGIKMVPFEELVYVPELDQYVEINEAKKRNLKYINISGTEIRENFLKQGRKLPEWFTRPEVAEILAETYVPKHKQGFCVWLTGLPCAGKSTIAEILATMLQARGRKVTLLDGDVVRTHLSRGLGFSKEDRITNILRVGFVASEIVKHNGVVICALVSPYRSARNQVRNMMEEGKFIEVFVDAPVEVCEERDVKGLYKKAKEGLIKGFTGVDDPYEPPVAPEVRVDTTKLTPEESALKILEFLKKEGFIKD.

A sulfate adenylyltransferase region spans residues 1–370 (MEKIKYLKSI…LAETYVPKHK (370 aa)). The tract at residues 371–546 (QGFCVWLTGL…FLKKEGFIKD (176 aa)) is adenylsulfate kinase. ATP is bound at residue 379–386 (GLPCAGKS). Ser453 (phosphoserine intermediate) is an active-site residue.

It in the N-terminal section; belongs to the sulfate adenylyltransferase family. The protein in the C-terminal section; belongs to the APS kinase family.

It carries out the reaction sulfate + ATP + H(+) = adenosine 5'-phosphosulfate + diphosphate. The enzyme catalyses adenosine 5'-phosphosulfate + ATP = 3'-phosphoadenylyl sulfate + ADP + H(+). Its pathway is sulfur metabolism; hydrogen sulfide biosynthesis; sulfite from sulfate: step 1/3. It functions in the pathway sulfur metabolism; hydrogen sulfide biosynthesis; sulfite from sulfate: step 2/3. The polypeptide is Probable bifunctional SAT/APS kinase (sat/cysC) (Aquifex aeolicus (strain VF5)).